The sequence spans 1466 residues: ABC transporter G family member 10 (1466 aa).

Residues 23-45 are compositionally biased toward low complexity; that stretch reads NTPQYENNNNNNNNTSGNESPNI. The segment at 23–47 is disordered; it reads NTPQYENNNNNNNNTSGNESPNILN. Residues 138 to 392 form the ABC transporter 1 domain; sequence VTIFNLFRPS…FLDLGFDCEP (255 aa). Positions 497–724 constitute an ABC transmembrane type-2 1 domain; that stretch reads WGDRFALISK…NGSTMSYQDQ (228 aa). 6 consecutive transmembrane segments (helical) span residues 501–521, 537–557, 586–606, 611–631, 641–661, and 767–787; these read FALISKYISIIVQTFVYASLF, AIYAAILFNAFVSAGELGLTF, IPLTAIQVTIFSVIVYFMYGL, GKFFIFLFTIFGSTLSMVAFF, LYVSQNILNVFILFMFTYGGY, and IITFLWWIFFVIINMIALELF. Residues 838–1082 enclose the ABC transporter 2 domain; the sequence is FTWNHIHYTV…LTSYFERNGV (245 aa). Position 874–881 (874–881) interacts with ATP; sequence GSSGAGKT. Residues 1177-1399 enclose the ABC transmembrane type-2 2 domain; it reads SYVYGIFTQA…LTCKEYFKPT (223 aa). 6 helical membrane passes run 1178–1198, 1214–1234, 1253–1273, 1290–1310, 1319–1339, and 1440–1460; these read YVYGIFTQAAASGLIIGFTFW, IFEILFLGILYIFIAIPQFLI, FAISIVIVELPFVAVAGTICF, FYFYITFILFLFICVSLGQVV, LAQTILPLLLVMLFLFCGVLV, and YGILWAFFIFNIIMVVSFVYL.

Belongs to the ABC transporter superfamily. ABCG family. PDR (TC 3.A.1.205) subfamily.

It localises to the membrane. This Dictyostelium discoideum (Social amoeba) protein is ABC transporter G family member 10 (abcG10).